A 158-amino-acid chain; its full sequence is Endoribonuclease YbeY (158 aa).

Zn(2+)-binding residues include His-118, His-122, and His-128.

Belongs to the endoribonuclease YbeY family. Requires Zn(2+) as cofactor.

It localises to the cytoplasm. Single strand-specific metallo-endoribonuclease involved in late-stage 70S ribosome quality control and in maturation of the 3' terminus of the 16S rRNA. The protein is Endoribonuclease YbeY of Bartonella bacilliformis (strain ATCC 35685 / KC583 / Herrer 020/F12,63).